The following is a 255-amino-acid chain: Small ribosomal subunit protein uS2 (255 aa).

Belongs to the universal ribosomal protein uS2 family.

This Streptococcus thermophilus (strain CNRZ 1066) protein is Small ribosomal subunit protein uS2.